Here is a 79-residue protein sequence, read N- to C-terminus: Protein OPG081 (79 aa).

Over 1–3 (MAD) the chain is Intravirion. The helical transmembrane segment at 4 to 24 (AITVLTAIGITVLMLLMVISG) threads the bilayer. The Virion surface portion of the chain corresponds to 25-47 (TAMIVKELNPNDIFTMQSLKFNR). A helical transmembrane segment spans residues 48-68 (AVTIFKYIGLFIYIPGTIILY). The Intravirion portion of the chain corresponds to 69–79 (ATYIKSLLMKS).

Belongs to the orthopoxvirus OPG081 family.

Its subcellular location is the virion membrane. In terms of biological role, envelope protein. This Variola virus protein is Protein OPG081 (OPG081).